The primary structure comprises 167 residues: Endoribonuclease YbeY (167 aa).

Residues His132, His136, and His142 each coordinate Zn(2+).

This sequence belongs to the endoribonuclease YbeY family. The cofactor is Zn(2+).

The protein resides in the cytoplasm. In terms of biological role, single strand-specific metallo-endoribonuclease involved in late-stage 70S ribosome quality control and in maturation of the 3' terminus of the 16S rRNA. This is Endoribonuclease YbeY from Clostridium tetani (strain Massachusetts / E88).